A 208-amino-acid polypeptide reads, in one-letter code: Translation initiation factor IF-3 (208 aa).

This sequence belongs to the IF-3 family. Monomer.

The protein localises to the cytoplasm. IF-3 binds to the 30S ribosomal subunit and shifts the equilibrium between 70S ribosomes and their 50S and 30S subunits in favor of the free subunits, thus enhancing the availability of 30S subunits on which protein synthesis initiation begins. The polypeptide is Translation initiation factor IF-3 (Parabacteroides distasonis (strain ATCC 8503 / DSM 20701 / CIP 104284 / JCM 5825 / NCTC 11152)).